An 81-amino-acid chain; its full sequence is Photosystem I iron-sulfur center (81 aa).

4Fe-4S ferredoxin-type domains are found at residues 2–31 (SHTV…MIPW) and 39–68 (IASS…VRVY). The [4Fe-4S] cluster site is built by Cys11, Cys14, Cys17, Cys21, Cys48, Cys51, Cys54, and Cys58.

In terms of assembly, the eukaryotic PSI reaction center is composed of at least 11 subunits. It depends on [4Fe-4S] cluster as a cofactor.

It is found in the plastid. Its subcellular location is the chloroplast thylakoid membrane. The catalysed reaction is reduced [plastocyanin] + hnu + oxidized [2Fe-2S]-[ferredoxin] = oxidized [plastocyanin] + reduced [2Fe-2S]-[ferredoxin]. Apoprotein for the two 4Fe-4S centers FA and FB of photosystem I (PSI); essential for photochemical activity. FB is the terminal electron acceptor of PSI, donating electrons to ferredoxin. The C-terminus interacts with PsaA/B/D and helps assemble the protein into the PSI complex. Required for binding of PsaD and PsaE to PSI. PSI is a plastocyanin-ferredoxin oxidoreductase, converting photonic excitation into a charge separation, which transfers an electron from the donor P700 chlorophyll pair to the spectroscopically characterized acceptors A0, A1, FX, FA and FB in turn. The chain is Photosystem I iron-sulfur center from Chaetosphaeridium globosum (Charophycean green alga).